A 124-amino-acid chain; its full sequence is Small ribosomal subunit protein uS12 (124 aa).

Asp89 carries the 3-methylthioaspartic acid modification.

The protein belongs to the universal ribosomal protein uS12 family. In terms of assembly, part of the 30S ribosomal subunit. Contacts proteins S8 and S17. May interact with IF1 in the 30S initiation complex.

In terms of biological role, with S4 and S5 plays an important role in translational accuracy. Functionally, interacts with and stabilizes bases of the 16S rRNA that are involved in tRNA selection in the A site and with the mRNA backbone. Located at the interface of the 30S and 50S subunits, it traverses the body of the 30S subunit contacting proteins on the other side and probably holding the rRNA structure together. The combined cluster of proteins S8, S12 and S17 appears to hold together the shoulder and platform of the 30S subunit. This chain is Small ribosomal subunit protein uS12, found in Vibrio campbellii (strain ATCC BAA-1116).